Consider the following 210-residue polypeptide: Thymidylate kinase (210 aa).

Residue 10-17 coordinates ATP; that stretch reads GLEGAGKT.

It belongs to the thymidylate kinase family.

The catalysed reaction is dTMP + ATP = dTDP + ADP. In terms of biological role, phosphorylation of dTMP to form dTDP in both de novo and salvage pathways of dTTP synthesis. This chain is Thymidylate kinase, found in Erwinia tasmaniensis (strain DSM 17950 / CFBP 7177 / CIP 109463 / NCPPB 4357 / Et1/99).